The primary structure comprises 323 residues: Forkhead transcription factor fkh-6 (323 aa).

The segment at residues 21 to 122 (KPPYSYVALI…DNGNFKRRRV (102 aa)) is a DNA-binding region (fork-head).

It is found in the nucleus. Its function is as follows. Probable transcription factor. Binds to the DNA sequence motif 5'-[TA]TGTT[TG]T[TG][ATG]TT-3'. Regulates sexual dimorphism in the gonad, promoting male gonadal cell fates in chromosomally (XO) male animals, yet plays a role in gonadogenesis in both sexes; probably acts downstream of terminal regulator of sex determination tra-1, to control early gonadogenesis. Positively modulates expression of homeobox protein egl-5, probably acting indirectly, during early gonadal development. The chain is Forkhead transcription factor fkh-6 from Caenorhabditis elegans.